A 238-amino-acid polypeptide reads, in one-letter code: uncharacterized protein (238 aa).

The protein belongs to the mimivirus L74/L77/R857 family.

This is an uncharacterized protein from Acanthamoeba polyphaga mimivirus (APMV).